The sequence spans 73 residues: uncharacterized protein (73 aa).

2 helical membrane passes run Leu-4–Val-24 and Ala-51–Leu-71.

Its subcellular location is the cell membrane. This is an uncharacterized protein from Escherichia coli O157:H7.